Reading from the N-terminus, the 505-residue chain is Glycerol kinase (505 aa).

Residue Thr14 coordinates ADP. Positions 14, 15, and 16 each coordinate ATP. Thr14 lines the sn-glycerol 3-phosphate pocket. Arg18 is a binding site for ADP. Positions 84, 85, 136, and 246 each coordinate sn-glycerol 3-phosphate. Glycerol is bound by residues Arg84, Glu85, Tyr136, Asp246, and Gln247. Residues Thr268 and Gly311 each coordinate ADP. Residues Thr268, Gly311, Gln315, and Gly412 each coordinate ATP. ADP contacts are provided by Gly412 and Asn416.

Belongs to the FGGY kinase family.

The enzyme catalyses glycerol + ATP = sn-glycerol 3-phosphate + ADP + H(+). Its pathway is polyol metabolism; glycerol degradation via glycerol kinase pathway; sn-glycerol 3-phosphate from glycerol: step 1/1. With respect to regulation, inhibited by fructose 1,6-bisphosphate (FBP). In terms of biological role, key enzyme in the regulation of glycerol uptake and metabolism. Catalyzes the phosphorylation of glycerol to yield sn-glycerol 3-phosphate. The chain is Glycerol kinase from Vibrio cholerae serotype O1 (strain ATCC 39315 / El Tor Inaba N16961).